The chain runs to 191 residues: Protein GrpE (191 aa).

Residues 1-21 are compositionally biased toward basic and acidic residues; that stretch reads MSDKKKNAEEFEETFSDKTSE. Residues 1–39 are disordered; sequence MSDKKKNAEEFEETFSDKTSEDESTVENETVEENENEDV. The segment covering 22–38 has biased composition (acidic residues); that stretch reads DESTVENETVEENENED.

Belongs to the GrpE family. In terms of assembly, homodimer.

The protein resides in the cytoplasm. Its function is as follows. Participates actively in the response to hyperosmotic and heat shock by preventing the aggregation of stress-denatured proteins, in association with DnaK and GrpE. It is the nucleotide exchange factor for DnaK and may function as a thermosensor. Unfolded proteins bind initially to DnaJ; upon interaction with the DnaJ-bound protein, DnaK hydrolyzes its bound ATP, resulting in the formation of a stable complex. GrpE releases ADP from DnaK; ATP binding to DnaK triggers the release of the substrate protein, thus completing the reaction cycle. Several rounds of ATP-dependent interactions between DnaJ, DnaK and GrpE are required for fully efficient folding. The polypeptide is Protein GrpE (Tetragenococcus halophilus (Pediococcus halophilus)).